The sequence spans 639 residues: MLDFFTIFSKGGLVLWCFQGVSDSCTGPVNALIRSVLLQERGGNNSFTHEALTLKYKLDNQFELVFVVGFQKILTLTYVDKLIDDVHRLFRDKYRTEIQQQSALSLLNGTFDFQNDFLRLLREAEESSKIRAPTTMKKFEDSEKAKKPVRSMIETRGEKPKEKAKNNKKNKGAKKEGSDGPLATSKAAPAEKSGLPVGPENGEELSKEEQIRRKREEFIQKHGRGMEKSSKSSKSDAPKEKGKKAPRVWALGGSANKEVLDYSTPTTNGAPEAAPPEDINLIRGTGPGRQLQDLDCSSSDDEGAAQNSTKPSATKGTLGGMFGMLKGLVGSKSLTREDMESVLDKMRDHLIAKNVAADIAVQLCESVANKLEGKVMGTFSTVTSTVKQALQESLVQILQPQRRVDMLRDIMDAQRHQRPYVVTFCGVNGVGKSTNLAKISFWLLENGFSVLIAACDTFRAGAVEQLRTHTRRLSALHPPEKHGGRTMVQLFEKGYGKDAAGIAMEAIAFARNQGFDVVLVDTAGRMQDNAPLMTALAKLITVNTPDLVLFVGEALVGNEAVDQLVKFNRALADHSMAQTPRLIDGIVLTKFDTIDDKVGAAISMTYITSKPIVFVGTGQTYCDLRSLNAKAVVAALMKA.

The tract at residues 132–317 (APTTMKKFED…STKPSATKGT (186 aa)) is disordered. Composition is skewed to basic and acidic residues over residues 137–146 (KKFEDSEKAK) and 153–165 (IETR…EKAK). A Phosphoserine modification is found at Ser178. A compositionally biased stretch (basic and acidic residues) spans 204–240 (ELSKEEQIRRKREEFIQKHGRGMEKSSKSSKSDAPKE). Thr285 is subject to Phosphothreonine. Ser297, Ser298, and Ser299 each carry phosphoserine. Residues 305–315 (AQNSTKPSATK) show a composition bias toward polar residues. Positions 420–637 (YVVTFCGVNG…NAKAVVAALM (218 aa)) are NG domain. Residue 426–433 (GVNGVGKS) participates in GTP binding. A Phosphoserine modification is found at Ser474. GTP is bound at residue 521–525 (DTAGR). Thr579 carries the phosphothreonine modification. 589–592 (TKFD) serves as a coordination point for GTP.

Belongs to the GTP-binding SRP family. Heterodimer with SRPRB. Interacts with the signal recognition particle (SRP) complex subunit SRP54.

The protein resides in the endoplasmic reticulum membrane. In terms of biological role, component of the SRP (signal recognition particle) receptor. Ensures, in conjunction with the signal recognition particle, the correct targeting of the nascent secretory proteins to the endoplasmic reticulum membrane system. Forms a guanosine 5'-triphosphate (GTP)-dependent complex with the SRP subunit SRP54. SRP receptor compaction and GTPase rearrangement drive SRP-mediated cotranslational protein translocation into the ER. The sequence is that of Signal recognition particle receptor subunit alpha from Bos taurus (Bovine).